The chain runs to 283 residues: Thymidylate synthase (283 aa).

Arg22 lines the dUMP pocket. The active-site Nucleophile is Cys160. DUMP contacts are provided by residues Arg180–Asp183, Asn191, and His221–Tyr223. Residue Asp183 participates in (6R)-5,10-methylene-5,6,7,8-tetrahydrofolate binding. (6R)-5,10-methylene-5,6,7,8-tetrahydrofolate is bound at residue Ser282.

This sequence belongs to the thymidylate synthase family. Bacterial-type ThyA subfamily. As to quaternary structure, homodimer.

Its subcellular location is the cytoplasm. The enzyme catalyses dUMP + (6R)-5,10-methylene-5,6,7,8-tetrahydrofolate = 7,8-dihydrofolate + dTMP. The protein operates within pyrimidine metabolism; dTTP biosynthesis. Functionally, catalyzes the reductive methylation of 2'-deoxyuridine-5'-monophosphate (dUMP) to 2'-deoxythymidine-5'-monophosphate (dTMP) while utilizing 5,10-methylenetetrahydrofolate (mTHF) as the methyl donor and reductant in the reaction, yielding dihydrofolate (DHF) as a by-product. This enzymatic reaction provides an intracellular de novo source of dTMP, an essential precursor for DNA biosynthesis. This chain is Thymidylate synthase, found in Vibrio atlanticus (strain LGP32) (Vibrio splendidus (strain Mel32)).